The following is a 266-amino-acid chain: uncharacterized protein (266 aa).

It belongs to the chlamydial CPn_0087/CT_309/TC_0583 family.

This is an uncharacterized protein from Chlamydia trachomatis serovar D (strain ATCC VR-885 / DSM 19411 / UW-3/Cx).